Consider the following 132-residue polypeptide: Tumor suppressor ARF (132 aa).

The interval 1–64 (MVRRFLVTLR…LGQQPLPRRP (64 aa)) is interaction with CDK5RAP3 and MDM2. The segment at 56-132 (GQQPLPRRPG…CLGPSARGPG (77 aa)) is disordered. A compositionally biased stretch (low complexity) spans 71–83 (RPSGGAAAAPRRG). The segment covering 84–99 (AQLRRPRHSHPTRARR) has biased composition (basic residues). Positions 103 to 117 (GLPGHAGGAAPGRGA) are enriched in gly residues.

As to quaternary structure, does not interact with cyclins, CDK1, CDK2, CDK4, CDK5 or CDK6. Binds to BCL6, E2F1, HUWE1, MDM2, MYC, NPM1/B23, TOP1/TOPOI and UBE2I/UBC9. Interacts with TBRG1 and COMMD1. Interacts with CDKN2AIP and E4F1. Interacts with CDK5RAP3 and MDM2; form a ternary complex involved in regulation of p53/TP53. Interacts with NOP53; the interaction is direct and promotes ARF nucleoplasmic relocalization and ubiquitin-mediated proteasomal degradation. Interacts with TTF1 (via the N-terminal region (NRD) and a C-terminal region); the interaction is direct and inhibits the nucleolar localization of TTF1. In terms of assembly, interacts with C1QBP. Ubiquitinated in normal cells by TRIP12 via the ubiquitin fusion degradation (UFD) pathway, a process that mediates ubiquitination at the N-terminus, regardless of the absence of lysine residues. Ubiquitination leads to its proteasomal degradation. In cancer cells, however, TRIP12 is located in a different cell compartment, preventing ubiquitination and degradation.

Its subcellular location is the nucleus. The protein localises to the nucleolus. It is found in the nucleoplasm. It localises to the mitochondrion. Its function is as follows. Capable of inducing cell cycle arrest in G1 and G2 phases. Acts as a tumor suppressor. Binds to MDM2 and blocks its nucleocytoplasmic shuttling by sequestering it in the nucleolus. This inhibits the oncogenic action of MDM2 by blocking MDM2-induced degradation of p53 and enhancing p53-dependent transactivation and apoptosis. Also induces G2 arrest and apoptosis in a p53-independent manner by preventing the activation of cyclin B1/CDC2 complexes. Binds to BCL6 and down-regulates BCL6-induced transcriptional repression. Binds to E2F1 and MYC and blocks their transcriptional activator activity but has no effect on MYC transcriptional repression. Binds to TOP1/TOPOI and stimulates its activity. This complex binds to rRNA gene promoters and may play a role in rRNA transcription and/or maturation. Interacts with NPM1/B23 and promotes its polyubiquitination and degradation, thus inhibiting rRNA processing. Plays a role in inhibiting ribosome biogenesis, perhaps by binding to the nucleolar localization sequence of transcription termination factor TTF1, and thereby preventing nucleolar localization of TTF1. Interacts with COMMD1 and promotes its 'Lys63'-linked polyubiquitination. Interacts with UBE2I/UBC9 and enhances sumoylation of a number of its binding partners including MDM2 and E2F1. Binds to HUWE1 and represses its ubiquitin ligase activity. May play a role in controlling cell proliferation and apoptosis during mammary gland development. Functionally, may be involved in regulation of autophagy and caspase-independent cell death; the short-lived mitochondrial isoform is stabilized by C1QBP. In Homo sapiens (Human), this protein is Tumor suppressor ARF.